Here is a 37-residue protein sequence, read N- to C-terminus: Large ribosomal subunit protein bL36c (37 aa).

Belongs to the bacterial ribosomal protein bL36 family.

Its subcellular location is the plastid. The protein resides in the chloroplast. The chain is Large ribosomal subunit protein bL36c from Liriodendron tulipifera (Tuliptree).